Reading from the N-terminus, the 343-residue chain is MGAIMQANENMGSKLPKTDGKVIYLAGGCFWGLEAYMERIYGVVDASSGYANGKTQSTNYQKLHESDHAESVKVVYDPKKISLDKLLRYYFKVVDPVSVNKQGNDVGRQYRTGIYYVDNADKKVIDNALKELQKSVKGKIAIEVEPLKNYVRAEIYHQDYLKKNPNGYCHIDLKKADEVIVDSDKYTKPSDEVLKKKLTQLQYEVTQNKRTEKPFENEYYNKEEEGIYVDITTGEPLFSMADKYDSGCGWPSFSKPISKDVVKYEDDESLNMRRTEVLSRIGKAHLGHVFNDGPKELGGLRYCINSASLRFIPLKDMEKEGYGEFIPYIKKGELKKYIHDKTH.

Residues 21 to 174 (KVIYLAGGCF…PNGYCHIDLK (154 aa)) form a peptide methionine sulfoxide reductase A region. Cys-29 functions as the Cysteine sulfenic acid (-SOH) intermediate in the catalytic mechanism. Positions 191–314 (DEVLKKKLTQ…NSASLRFIPL (124 aa)) constitute a MsrB domain. Cys-303 (nucleophile) is an active-site residue.

It in the N-terminal section; belongs to the MsrA Met sulfoxide reductase family. In the C-terminal section; belongs to the MsrB Met sulfoxide reductase family.

It catalyses the reaction L-methionyl-[protein] + [thioredoxin]-disulfide + H2O = L-methionyl-(S)-S-oxide-[protein] + [thioredoxin]-dithiol. The catalysed reaction is [thioredoxin]-disulfide + L-methionine + H2O = L-methionine (S)-S-oxide + [thioredoxin]-dithiol. It carries out the reaction L-methionyl-[protein] + [thioredoxin]-disulfide + H2O = L-methionyl-(R)-S-oxide-[protein] + [thioredoxin]-dithiol. Functionally, has an important function as a repair enzyme for proteins that have been inactivated by oxidation. Catalyzes the reversible oxidation-reduction of methionine sulfoxide in proteins to methionine. The sequence is that of Peptide methionine sulfoxide reductase msrA/msrB from Enterococcus faecalis (Streptococcus faecalis).